Consider the following 244-residue polypeptide: 2,5-diamino-6-ribosylamino-4(3H)-pyrimidinone 5'-phosphate reductase (244 aa).

Residues threonine 74, aspartate 78, isoleucine 160, and 183–187 contribute to the NADP(+) site; that span reads GSHVI.

This sequence belongs to the HTP reductase family. As to quaternary structure, homodimer.

The enzyme catalyses 2,5-diamino-6-(1-D-ribitylamino)pyrimidin-4(3H)-one 5'-phosphate + NADP(+) = 2,5-diamino-6-(1-D-ribosylamino)pyrimidin-4(3H)-one 5'-phosphate + NADPH + H(+). The catalysed reaction is 2,5-diamino-6-(1-D-ribitylamino)pyrimidin-4(3H)-one 5'-phosphate + NAD(+) = 2,5-diamino-6-(1-D-ribosylamino)pyrimidin-4(3H)-one 5'-phosphate + NADH + H(+). The protein operates within cofactor biosynthesis; riboflavin biosynthesis. In terms of biological role, catalyzes an early step in riboflavin biosynthesis, the NADPH-dependent reduction of the ribose side chain of 2,5-diamino-6-ribosylamino-4(3H)-pyrimidinone 5'-phosphate, yielding 2,5-diamino-6-ribitylamino-4(3H)-pyrimidinone 5'-phosphate. This is 2,5-diamino-6-ribosylamino-4(3H)-pyrimidinone 5'-phosphate reductase (RIB7) from Candida glabrata (strain ATCC 2001 / BCRC 20586 / JCM 3761 / NBRC 0622 / NRRL Y-65 / CBS 138) (Yeast).